The primary structure comprises 239 residues: UPF0641 membrane protein YHR140W (239 aa).

At 1 to 11 the chain is on the cytoplasmic side; that stretch reads MMSCLVPTRFT. Residues 12–31 traverse the membrane as a helical segment; the sequence is LTLNTACLLTSTWGFVRATS. Residues 32-45 lie on the Lumenal side of the membrane; that stretch reads VVLPPSLSKAGHKQ. Residues 46–66 traverse the membrane as a helical segment; sequence FLTIISIIATIINNAVNISNY. Over 67–99 the chain is Cytoplasmic; it reads YIQRNNKMNLETKKKSDFISRHVTLPVSLVLES. The helical transmembrane segment at 100–120 threads the bilayer; the sequence is IVATVYWPLRLFFVNLIMHGV. The Lumenal segment spans residues 121-125; that stretch reads ESTAK. A helical transmembrane segment spans residues 126–146; the sequence is TPFPMTVDMAIHLYPILYLLA. Topologically, residues 147 to 162 are cytoplasmic; sequence DHYLSGSGTKFKLSNK. Residues 163–183 traverse the membrane as a helical segment; sequence HAWLIVTSLAFSYFQYLAFLI. At 184–204 the chain is on the lumenal side; the sequence is DAGQGQAYPYPFLDVNEPYKS. The chain crosses the membrane as a helical span at residues 205–225; that stretch reads IIFVVVATITWAYYVFYQKFP. Topologically, residues 226 to 239 are cytoplasmic; that stretch reads PKYIKKSAKKGDKN.

It belongs to the UPF0641 family.

Its subcellular location is the endoplasmic reticulum membrane. This is UPF0641 membrane protein YHR140W from Saccharomyces cerevisiae (strain ATCC 204508 / S288c) (Baker's yeast).